The following is a 312-amino-acid chain: DNA-directed RNA polymerase subunit alpha (312 aa).

Positions 1–226 (MIEFEKPRIE…EHLDIFVNLT (226 aa)) are alpha N-terminal domain (alpha-NTD). Residues 243–312 (KEKMLEMTIE…DLGLGLRKDD (70 aa)) are alpha C-terminal domain (alpha-CTD).

This sequence belongs to the RNA polymerase alpha chain family. As to quaternary structure, homodimer. The RNAP catalytic core consists of 2 alpha, 1 beta, 1 beta' and 1 omega subunit. When a sigma factor is associated with the core the holoenzyme is formed, which can initiate transcription.

The enzyme catalyses RNA(n) + a ribonucleoside 5'-triphosphate = RNA(n+1) + diphosphate. Its function is as follows. DNA-dependent RNA polymerase catalyzes the transcription of DNA into RNA using the four ribonucleoside triphosphates as substrates. The protein is DNA-directed RNA polymerase subunit alpha of Enterococcus faecalis (strain ATCC 700802 / V583).